The chain runs to 332 residues: 2,3-diketo-L-gulonate reductase (332 aa).

His-44 acts as the Proton donor in catalysis. Residues 168-174 (ITMVDMS), 224-225 (WK), and 304-306 (GHE) each bind NAD(+).

The protein belongs to the LDH2/MDH2 oxidoreductase family. DlgD subfamily. In terms of assembly, homodimer.

Its subcellular location is the cytoplasm. It carries out the reaction 3-dehydro-L-gulonate + NAD(+) = 2,3-dioxo-L-gulonate + NADH + H(+). The enzyme catalyses 3-dehydro-L-gulonate + NADP(+) = 2,3-dioxo-L-gulonate + NADPH + H(+). Its function is as follows. Catalyzes the reduction of 2,3-diketo-L-gulonate in the presence of NADH, to form 3-keto-L-gulonate. This is 2,3-diketo-L-gulonate reductase from Salmonella heidelberg (strain SL476).